A 225-amino-acid polypeptide reads, in one-letter code: Triosephosphate isomerase (225 aa).

9–11 (NMK) contacts substrate. The active-site Electrophile is histidine 93. The active-site Proton acceptor is the glutamate 141. Residues isoleucine 146, glycine 181, and 202–203 (AS) contribute to the substrate site.

Belongs to the triosephosphate isomerase family. In terms of assembly, homotetramer; dimer of dimers.

The protein localises to the cytoplasm. It carries out the reaction D-glyceraldehyde 3-phosphate = dihydroxyacetone phosphate. It participates in carbohydrate biosynthesis; gluconeogenesis. The protein operates within carbohydrate degradation; glycolysis; D-glyceraldehyde 3-phosphate from glycerone phosphate: step 1/1. In terms of biological role, involved in the gluconeogenesis. Catalyzes stereospecifically the conversion of dihydroxyacetone phosphate (DHAP) to D-glyceraldehyde-3-phosphate (G3P). This Caldivirga maquilingensis (strain ATCC 700844 / DSM 13496 / JCM 10307 / IC-167) protein is Triosephosphate isomerase.